Here is a 708-residue protein sequence, read N- to C-terminus: Glycine--tRNA ligase beta subunit (708 aa).

Belongs to the class-II aminoacyl-tRNA synthetase family. Tetramer of two alpha and two beta subunits.

Its subcellular location is the cytoplasm. It carries out the reaction tRNA(Gly) + glycine + ATP = glycyl-tRNA(Gly) + AMP + diphosphate. The protein is Glycine--tRNA ligase beta subunit of Methylobacillus flagellatus (strain ATCC 51484 / DSM 6875 / VKM B-1610 / KT).